A 369-amino-acid chain; its full sequence is Anhydro-N-acetylmuramic acid kinase (369 aa).

12–19 (GTSMDGVD) lines the ATP pocket.

It belongs to the anhydro-N-acetylmuramic acid kinase family.

The catalysed reaction is 1,6-anhydro-N-acetyl-beta-muramate + ATP + H2O = N-acetyl-D-muramate 6-phosphate + ADP + H(+). It participates in amino-sugar metabolism; 1,6-anhydro-N-acetylmuramate degradation. It functions in the pathway cell wall biogenesis; peptidoglycan recycling. Catalyzes the specific phosphorylation of 1,6-anhydro-N-acetylmuramic acid (anhMurNAc) with the simultaneous cleavage of the 1,6-anhydro ring, generating MurNAc-6-P. Is required for the utilization of anhMurNAc either imported from the medium or derived from its own cell wall murein, and thus plays a role in cell wall recycling. The sequence is that of Anhydro-N-acetylmuramic acid kinase from Shewanella woodyi (strain ATCC 51908 / MS32).